A 217-amino-acid chain; its full sequence is Probable GTP-binding protein EngB (217 aa).

The region spanning 33–217 is the EngB-type G domain; the sequence is GPAEIAFAGR…RITIEQAVAR (185 aa). GTP-binding positions include 41–48, 68–72, 95–98, 162–165, and 196–198; these read GRSNVGKS, GRTQE, DMPG, TKTD, and TSS. Residues S48 and T70 each coordinate Mg(2+).

The protein belongs to the TRAFAC class TrmE-Era-EngA-EngB-Septin-like GTPase superfamily. EngB GTPase family. It depends on Mg(2+) as a cofactor.

Functionally, necessary for normal cell division and for the maintenance of normal septation. This chain is Probable GTP-binding protein EngB, found in Sinorhizobium fredii (strain NBRC 101917 / NGR234).